The following is a 146-amino-acid chain: Small ribosomal subunit protein bS6 (146 aa).

The disordered stretch occupies residues 100–146 (QSAMMRKRDDDDRGDRPDRGDRGRGPRPDRPPRRPRDDAAASDEGGF). Positions 105–138 (RKRDDDDRGDRPDRGDRGRGPRPDRPPRRPRDDA) are enriched in basic and acidic residues.

The protein belongs to the bacterial ribosomal protein bS6 family.

Binds together with bS18 to 16S ribosomal RNA. The chain is Small ribosomal subunit protein bS6 from Methylocella silvestris (strain DSM 15510 / CIP 108128 / LMG 27833 / NCIMB 13906 / BL2).